Here is a 632-residue protein sequence, read N- to C-terminus: tRNA uridine 5-carboxymethylaminomethyl modification enzyme MnmG (632 aa).

Residues 15–20, valine 127, and serine 182 each bind FAD; that span reads GAGHAG. The disordered stretch occupies residues 203–226; it reads TPPRVKSSTIDYSKTEEQPGDDHP. Over residues 215–226 the composition is skewed to basic and acidic residues; it reads SKTEEQPGDDHP. 274–288 is a binding site for NAD(+); it reads GARYCPSIEDKIVRF. An FAD-binding site is contributed by glutamine 371.

This sequence belongs to the MnmG family. Homodimer. Heterotetramer of two MnmE and two MnmG subunits. FAD is required as a cofactor.

It is found in the cytoplasm. In terms of biological role, NAD-binding protein involved in the addition of a carboxymethylaminomethyl (cmnm) group at the wobble position (U34) of certain tRNAs, forming tRNA-cmnm(5)s(2)U34. The sequence is that of tRNA uridine 5-carboxymethylaminomethyl modification enzyme MnmG from Listeria monocytogenes serotype 4b (strain F2365).